Here is a 665-residue protein sequence, read N- to C-terminus: Kinesin-like protein KIF22 (665 aa).

Residues 43-368 (RVRVAVRLRP…LNFAARSKEV (326 aa)) form the Kinesin motor domain. Residue 127–134 (GPTGAGKT) coordinates ATP. The interval 379–428 (QPHALGPVKLSQKELLGPPEAKRARGPEEEEIGSPEPMAAPASASQKLSP) is disordered. A phosphoserine mark is found at S412, S427, and S452. A compositionally biased stretch (low complexity) spans 412 to 428 (SPEPMAAPASASQKLSP). Residue K465 forms a Glycyl lysine isopeptide (Lys-Gly) (interchain with G-Cter in SUMO2) linkage. Residues 465-508 (KRERMVLMKTVEEKDLEIERLKTKQKELEAKMLAQKAEEKENHC) adopt a coiled-coil conformation. Residues S543, S562, and S581 each carry the phosphoserine modification.

This sequence belongs to the TRAFAC class myosin-kinesin ATPase superfamily. Kinesin family. Interacts with FAM83D. Interacts with SIAH1. Post-translationally, ubiquitinated; mediated by SIAH1 and leading to its subsequent proteasomal degradation. In terms of tissue distribution, expressed in bone, cartilage, joint capsule, ligament, skin, and primary cultured chondrocytes.

It is found in the nucleus. The protein resides in the cytoplasm. Its subcellular location is the cytoskeleton. Its function is as follows. Kinesin family member that is involved in spindle formation and the movements of chromosomes during mitosis and meiosis. Binds to microtubules and to DNA. Plays a role in congression of laterally attached chromosomes in NDC80-depleted cells. The protein is Kinesin-like protein KIF22 (KIF22) of Homo sapiens (Human).